A 142-amino-acid chain; its full sequence is Nucleoside diphosphate kinase (142 aa).

The ATP site is built by Lys11, Phe59, Arg87, Thr93, Arg104, and Asn114. Catalysis depends on His117, which acts as the Pros-phosphohistidine intermediate.

It belongs to the NDK family. Homotetramer. The cofactor is Mg(2+).

The protein resides in the cytoplasm. The enzyme catalyses a 2'-deoxyribonucleoside 5'-diphosphate + ATP = a 2'-deoxyribonucleoside 5'-triphosphate + ADP. The catalysed reaction is a ribonucleoside 5'-diphosphate + ATP = a ribonucleoside 5'-triphosphate + ADP. Its function is as follows. Major role in the synthesis of nucleoside triphosphates other than ATP. The ATP gamma phosphate is transferred to the NDP beta phosphate via a ping-pong mechanism, using a phosphorylated active-site intermediate. The chain is Nucleoside diphosphate kinase from Hahella chejuensis (strain KCTC 2396).